We begin with the raw amino-acid sequence, 592 residues long: Aspartate--tRNA ligase (592 aa).

Residue E173 coordinates L-aspartate. The tract at residues Q197–K200 is aspartate. Residue R219 participates in L-aspartate binding. ATP contacts are provided by residues R219–E221 and Q228. H449 contributes to the L-aspartate binding site. Position 483 (E483) interacts with ATP. R490 serves as a coordination point for L-aspartate. G535–R538 contributes to the ATP binding site.

Belongs to the class-II aminoacyl-tRNA synthetase family. Type 1 subfamily. Homodimer.

It is found in the cytoplasm. The enzyme catalyses tRNA(Asp) + L-aspartate + ATP = L-aspartyl-tRNA(Asp) + AMP + diphosphate. In terms of biological role, catalyzes the attachment of L-aspartate to tRNA(Asp) in a two-step reaction: L-aspartate is first activated by ATP to form Asp-AMP and then transferred to the acceptor end of tRNA(Asp). In Shewanella loihica (strain ATCC BAA-1088 / PV-4), this protein is Aspartate--tRNA ligase.